We begin with the raw amino-acid sequence, 727 residues long: Protein TITANIA (727 aa).

Residues 1 to 136 (MFGDSDGSKD…LASLLQPVPA (136 aa)) are disordered. The segment covering 14–25 (GAPPSTTDPPFP) has biased composition (pro residues). Positions 67 to 88 (DDGKHCVERDFLHLSAPKRGDP) are enriched in basic and acidic residues. Low complexity predominate over residues 104 to 117 (DSLQLSLSLNSDGP). The PHD-type zinc finger occupies 406 to 470 (ACTCSVCHKF…QFQCLACNHS (65 aa)). Positions 629–697 (VKCKEAEAKL…LEELKMLENS (69 aa)) form a coiled coil.

As to expression, widely expressed.

It is found in the nucleus. In terms of biological role, probable transcription factor that functions as a regulator of metal transporter genes responsible for essential metals delivery to shoots and normal plant growth. Required for the maintenance of metal transporter gene expression, such as IRT1, IRT2, ZIP1, ZIP9, NRAMP1 and NRAMP5. The sequence is that of Protein TITANIA from Oryza sativa subsp. japonica (Rice).